Here is a 225-residue protein sequence, read N- to C-terminus: Leucyl/phenylalanyl-tRNA--protein transferase (225 aa).

The protein belongs to the L/F-transferase family.

Its subcellular location is the cytoplasm. The catalysed reaction is N-terminal L-lysyl-[protein] + L-leucyl-tRNA(Leu) = N-terminal L-leucyl-L-lysyl-[protein] + tRNA(Leu) + H(+). It carries out the reaction N-terminal L-arginyl-[protein] + L-leucyl-tRNA(Leu) = N-terminal L-leucyl-L-arginyl-[protein] + tRNA(Leu) + H(+). The enzyme catalyses L-phenylalanyl-tRNA(Phe) + an N-terminal L-alpha-aminoacyl-[protein] = an N-terminal L-phenylalanyl-L-alpha-aminoacyl-[protein] + tRNA(Phe). In terms of biological role, functions in the N-end rule pathway of protein degradation where it conjugates Leu, Phe and, less efficiently, Met from aminoacyl-tRNAs to the N-termini of proteins containing an N-terminal arginine or lysine. The polypeptide is Leucyl/phenylalanyl-tRNA--protein transferase (Nitrobacter hamburgensis (strain DSM 10229 / NCIMB 13809 / X14)).